A 198-amino-acid chain; its full sequence is MEHYISLLIRSIFIENLALSFFLGMCTFLAVSKKVKTAMGLGIAVIVVQTVAVPANNLIYNYVLKDGALVSGLDLSFLSFITFIGVIAALVQILEMALDKYFPALYNALGIFLPLITVNCAIFGGVSFMVQRDYNFVESVVYGVGSGAGWMLAIVAMAGIREKMKYSDVPEGLRGLGITFITAGLMALGFMSFSGISL.

The next 6 helical transmembrane spans lie at 11 to 31 (SIFI…FLAV), 39 to 59 (MGLG…NNLI), 77 to 97 (FLSF…LEMA), 110 to 130 (GIFL…SFMV), 140 to 160 (VVYG…MAGI), and 176 to 196 (LGIT…FSGI).

Belongs to the NqrDE/RnfAE family. In terms of assembly, composed of six subunits; NqrA, NqrB, NqrC, NqrD, NqrE and NqrF.

It localises to the cell inner membrane. It catalyses the reaction a ubiquinone + n Na(+)(in) + NADH + H(+) = a ubiquinol + n Na(+)(out) + NAD(+). Its function is as follows. NQR complex catalyzes the reduction of ubiquinone-1 to ubiquinol by two successive reactions, coupled with the transport of Na(+) ions from the cytoplasm to the periplasm. NqrA to NqrE are probably involved in the second step, the conversion of ubisemiquinone to ubiquinol. The polypeptide is Na(+)-translocating NADH-quinone reductase subunit E (Aeromonas hydrophila subsp. hydrophila (strain ATCC 7966 / DSM 30187 / BCRC 13018 / CCUG 14551 / JCM 1027 / KCTC 2358 / NCIMB 9240 / NCTC 8049)).